Here is a 639-residue protein sequence, read N- to C-terminus: Protein zwilch homolog (639 aa).

The span at 76–95 (QKTSSLLNRRENKKTIKSEK) shows a compositional bias: basic and acidic residues. A disordered region spans residues 76–116 (QKTSSLLNRRENKKTIKSEKEDESMDMETAEGDKENTVSET). Residues 96–105 (EDESMDMETA) show a composition bias toward acidic residues.

The protein belongs to the ZWILCH family. Component of the RZZ complex composed of rod-1, czw-1 and zwl-1. Interacts with the spindly-like protein spdl-1. Interacts with NDC80 complex component ndc-80.

It localises to the cytoplasm. It is found in the cell cortex. Its subcellular location is the chromosome. The protein resides in the centromere. The protein localises to the kinetochore. It localises to the cytoskeleton. It is found in the spindle. Its function is as follows. Essential component of the mitotic checkpoint, which prevents cells from prematurely exiting mitosis. Required for chromosome segregation, the assembly of the dynein-dynactin and mdf-1-mdf-2 complexes onto kinetochores and spindle pole separation. Its function related to the spindle assembly machinery and kinetochore-microtubule attachments likely depends on its association in the mitotic RZZ complex. The RZZ complex recruits the spindly-like protein spdl-1 to kinetochores. To prevent irregular chromosome segregation, the complex also inhibits the attachment of the kinetochore-associated NDC80 complex to microtubules. The recruitment of spdl-1 to kinetochores relieves this inhibition. Required for embryonic development. The chain is Protein zwilch homolog (zwl-1) from Caenorhabditis briggsae.